A 116-amino-acid chain; its full sequence is uncharacterized protein (116 aa).

This is an uncharacterized protein from Homo sapiens (Human).